A 503-amino-acid chain; its full sequence is Catalase (503 aa).

An N-terminal signal peptide occupies residues 1–21; the sequence is MHMSKSFLIISMGFVAVSVQA. Catalysis depends on residues histidine 72 and asparagine 145. Tyrosine 353 is a heme binding site.

It belongs to the catalase family. The cofactor is heme.

It is found in the periplasm. The enzyme catalyses 2 H2O2 = O2 + 2 H2O. In terms of biological role, decomposes hydrogen peroxide into water and oxygen; serves to protect cells from the toxic effects of hydrogen peroxide. The chain is Catalase from Vibrio cholerae serotype O1 (strain ATCC 39315 / El Tor Inaba N16961).